The primary structure comprises 396 residues: Period circadian protein (396 aa).

4 disordered regions span residues 27–120 (VTAP…APPV), 164–188 (LEYS…WEGE), 253–273 (GGNG…TNQY), and 333–362 (SPSS…TSQA). Over residues 93-114 (GTSGTGNSGDGGGGGGANGTGS) the composition is skewed to gly residues. Positions 253 to 262 (GGNGNVGSGN) are enriched in gly residues. The span at 333–342 (SPSSTNTNPN) shows a compositional bias: low complexity.

In terms of assembly, forms a heterodimer with timeless (TIM); the complex then translocates into the nucleus. In terms of processing, phosphorylated with a circadian rhythmicity, probably by the double-time protein (dbt). Phosphorylation could be implicated in the stability of per monomer and in the formation of heterodimer per-tim.

Its subcellular location is the nucleus. It localises to the cytoplasm. The protein resides in the perinuclear region. In terms of biological role, essential for biological clock functions. Determines the period length of circadian and ultradian rhythms; an increase in PER dosage leads to shortened circadian rhythms and a decrease leads to lengthened circadian rhythms. Essential for the circadian rhythmicity of locomotor activity, eclosion behavior, and for the rhythmic component of the male courtship song that originates in the thoracic nervous system. The biological cycle depends on the rhythmic formation and nuclear localization of the TIM-PER complex. Light induces the degradation of TIM, which promotes elimination of PER. Nuclear activity of the heterodimer coordinatively regulates PER and TIM transcription through a negative feedback loop. Behaves as a negative element in circadian transcriptional loop. Does not appear to bind DNA, suggesting indirect transcriptional inhibition. In Drosophila pavlovskiana (Fruit fly), this protein is Period circadian protein (per).